Reading from the N-terminus, the 1084-residue chain is Siderophore biosynthesis regulatory protein URBS1 (1084 aa).

Disordered stretches follow at residues 1-164, 245-283, and 300-337; these read MALP…QSSS, AEEH…RDSY, and RPVH…AGMR. The span at 23 to 51 shows a compositional bias: low complexity; it reads QAAAASSSSSSSSSHHPPPRIAARPIAPA. 2 stretches are compositionally biased toward polar residues: residues 97–106 and 128–141; these read SHHNASSTAT and RSQS…NRSQ. A compositionally biased stretch (low complexity) spans 150–164; that stretch reads PSRSQPNSPLLQSSS. The span at 245-260 shows a compositional bias: basic and acidic residues; that stretch reads AEEHAKMQRYSDEHPR. The GATA-type 1 zinc-finger motif lies at 338–362; the sequence is CSNCGVTSTPLWRRAPDGSTICNAC. 2 disordered regions span residues 372–405 and 442–472; these read HRSA…REDD and VSKR…KMDD. Over residues 373-385 the composition is skewed to polar residues; sequence RSASNRLSGSDAS. A GATA-type 2 zinc finger spans residues 482–506; that stretch reads CTNCQTTTTPLWRRDEDGNNICNAC. 6 disordered regions span residues 559 to 595, 643 to 679, 692 to 803, 841 to 940, 953 to 1019, and 1040 to 1084; these read IAPA…MREA, RAGA…DERD, THAA…TKLS, EAAG…SRRN, AAVP…DDHW, and ARPV…APRT. Basic and acidic residues-rich tracts occupy residues 650-659 and 715-725; these read RTSHPDDSRS and RLGRSELHGES. Over residues 752 to 781 the composition is skewed to basic residues; that stretch reads PHHHHHHHHHHANHASHAVHHGHHHHHHHP. Residues 875–888 are compositionally biased toward basic and acidic residues; that stretch reads RGTRSGHDSIKQEA. Residues 961-970 show a composition bias toward polar residues; the sequence is SPPSTVSNPA. Positions 1070-1084 are enriched in low complexity; the sequence is PVASSPSQAVSAPRT.

The protein resides in the nucleus. Functionally, involved in the regulation of secreted ferrichrome-type siderophores. Acts directly or indirectly to repress the biosynthesis of siderophores. The chain is Siderophore biosynthesis regulatory protein URBS1 (URBS1) from Mycosarcoma maydis (Corn smut fungus).